The primary structure comprises 137 residues: MRIMGLDVGDKTIGVALSDPLGWTAQGLEVIRRDTIEKDMNRLAQIISEYSVERILVGMPKNMNGTVGSQGEKVLAFIEKVKEKIDLPIKTWDERLSTVAAEKMLIQADVSRGKRKKVIDKMAAAVILQGYLDSGAK.

It belongs to the YqgF nuclease family.

It localises to the cytoplasm. Its function is as follows. Could be a nuclease involved in processing of the 5'-end of pre-16S rRNA. In Desulforamulus reducens (strain ATCC BAA-1160 / DSM 100696 / MI-1) (Desulfotomaculum reducens), this protein is Putative pre-16S rRNA nuclease.